The primary structure comprises 357 residues: Arginine kinase (357 aa).

Position 2 is an N-acetylalanine (Ala2). Residues 9–91 (KLEEGFKKLE…FDPIIEDYHK (83 aa)) form the Phosphagen kinase N-terminal domain. 64 to 68 (GVGVY) is a binding site for L-arginine. Residues 119-356 (FVISTRVRCG…LELIKIEKEM (238 aa)) enclose the Phosphagen kinase C-terminal domain. Residues 122-126 (STRVR) and His185 contribute to the ATP site. Residue Glu225 participates in L-arginine binding. Residue Arg229 coordinates ATP. Cys271 serves as a coordination point for L-arginine. Residues 280–284 (RASVH) and 309–314 (RGTRGE) each bind ATP. Glu314 is a binding site for L-arginine.

This sequence belongs to the ATP:guanido phosphotransferase family.

It catalyses the reaction L-arginine + ATP = N(omega)-phospho-L-arginine + ADP + H(+). The sequence is that of Arginine kinase from Callinectes sapidus (Blue crab).